Reading from the N-terminus, the 865-residue chain is cGMP-specific 3',5'-cyclic phosphodiesterase (865 aa).

Over residues 69-83 (CSCSSQQSSRADSSA) the composition is skewed to low complexity. The segment at 69 to 92 (CSCSSQQSSRADSSAPGTPTRKIS) is disordered. S92 is modified (phosphoserine). GAF domains follow at residues 154–304 (DVTA…GIVL) and 336–493 (SLEV…GLGI). The PDEase domain occupies 526–850 (ETKELQSLAA…QKWQALAEQQ (325 aa)). The Proton donor role is filled by H603. Residues H607, H643, D644, and D754 each coordinate Zn(2+). D644 lines the Mg(2+) pocket. 3',5'-cyclic GMP is bound at residue Q807.

Belongs to the cyclic nucleotide phosphodiesterase family. Zn(2+) serves as cofactor. The cofactor is Mg(2+). In terms of processing, phosphorylation is regulated by binding of cGMP to the two allosteric sites. Phosphorylation by PRKG1 leads to its activation. Isoform PDE5A1 and isoform PDE5A2 are highly expressed in the cerebellum, hippocampus, retina, lung, heart, spleen, and thoracic artery. Isoform PDE5A1, but not isoform PDE5A2, is also abundantly expressed in the pylorus.

It is found in the cytoplasm. It localises to the cytosol. The enzyme catalyses 3',5'-cyclic GMP + H2O = GMP + H(+). The protein operates within purine metabolism; 3',5'-cyclic GMP degradation; GMP from 3',5'-cyclic GMP: step 1/1. Inhibited by zaprinast. Functionally, plays a role in signal transduction by regulating the intracellular concentration of cyclic nucleotides. This phosphodiesterase catalyzes the specific hydrolysis of cGMP to 5'-GMP. Specifically regulates nitric-oxide-generated cGMP. The sequence is that of cGMP-specific 3',5'-cyclic phosphodiesterase (PDE5A) from Canis lupus familiaris (Dog).